The primary structure comprises 156 residues: Endoribonuclease YbeY (156 aa).

The Zn(2+) site is built by His111, His115, and His121.

It belongs to the endoribonuclease YbeY family. It depends on Zn(2+) as a cofactor.

Its subcellular location is the cytoplasm. Its function is as follows. Single strand-specific metallo-endoribonuclease involved in late-stage 70S ribosome quality control and in maturation of the 3' terminus of the 16S rRNA. This Hahella chejuensis (strain KCTC 2396) protein is Endoribonuclease YbeY.